The sequence spans 505 residues: ATP synthase subunit alpha (505 aa).

169-176 (GDRQTGKT) is a binding site for ATP.

It belongs to the ATPase alpha/beta chains family. In terms of assembly, F-type ATPases have 2 components, CF(1) - the catalytic core - and CF(0) - the membrane proton channel. CF(1) has five subunits: alpha(3), beta(3), gamma(1), delta(1), epsilon(1). CF(0) has three main subunits: a(1), b(2) and c(9-12). The alpha and beta chains form an alternating ring which encloses part of the gamma chain. CF(1) is attached to CF(0) by a central stalk formed by the gamma and epsilon chains, while a peripheral stalk is formed by the delta and b chains.

It localises to the cell membrane. It catalyses the reaction ATP + H2O + 4 H(+)(in) = ADP + phosphate + 5 H(+)(out). Produces ATP from ADP in the presence of a proton gradient across the membrane. The alpha chain is a regulatory subunit. The polypeptide is ATP synthase subunit alpha (Clostridium acetobutylicum (strain ATCC 824 / DSM 792 / JCM 1419 / IAM 19013 / LMG 5710 / NBRC 13948 / NRRL B-527 / VKM B-1787 / 2291 / W)).